The sequence spans 394 residues: Elongation factor Tu (394 aa).

Positions lysine 10–arginine 205 constitute a tr-type G domain. Residues glycine 19–threonine 26 form a G1 region. Glycine 19–threonine 26 serves as a coordination point for GTP. A Mg(2+)-binding site is contributed by threonine 26. The G2 stretch occupies residues glycine 60 to asparagine 64. Residues aspartate 81 to glycine 84 form a G3 region. GTP contacts are provided by residues aspartate 81–histidine 85 and asparagine 136–aspartate 139. The interval asparagine 136–aspartate 139 is G4. The tract at residues serine 174–leucine 176 is G5.

Belongs to the TRAFAC class translation factor GTPase superfamily. Classic translation factor GTPase family. EF-Tu/EF-1A subfamily. In terms of assembly, monomer.

It is found in the cytoplasm. The enzyme catalyses GTP + H2O = GDP + phosphate + H(+). Its function is as follows. GTP hydrolase that promotes the GTP-dependent binding of aminoacyl-tRNA to the A-site of ribosomes during protein biosynthesis. The chain is Elongation factor Tu from Bacteroides fragilis (strain ATCC 25285 / DSM 2151 / CCUG 4856 / JCM 11019 / LMG 10263 / NCTC 9343 / Onslow / VPI 2553 / EN-2).